We begin with the raw amino-acid sequence, 968 residues long: Angiomotin-like protein 1 (968 aa).

Composition is skewed to polar residues over residues V152–E164 and R177–E187. The segment at V152 to K258 is disordered. A compositionally biased stretch (low complexity) spans G203–G224. Phosphoserine is present on residues S253, S281, and S307. Positions R271–L291 form a coiled coil. The segment at N285–G343 is disordered. Coiled-coil stretches lie at residues V449–R645 and A676–E705. A disordered region spans residues A721–E742. Over residues T726 to E738 the composition is skewed to polar residues. S731 is modified (phosphoserine). Residues E748–I773 are a coiled coil. The interval Q785–K834 is disordered. Residues S804, S816, and S840 each carry the phosphoserine modification. A compositionally biased stretch (low complexity) spans A853–T878. A disordered region spans residues A853 to P956. Residues S912 and S918 each carry the phosphoserine modification. Residues E965–I968 carry the PDZ-binding motif.

It belongs to the angiomotin family. Polyubiquitinated by NEDD4, leading to proteasomal degradation. Expressed in exocrine glands, including pancreas, submandibular gland, lacrimal gland, parotid gland and sublingual gland (at protein level).

It is found in the cell junction. Its subcellular location is the tight junction. Functionally, inhibits the Wnt/beta-catenin signaling pathway, probably by recruiting CTNNB1 to recycling endosomes and hence preventing its translocation to the nucleus. The sequence is that of Angiomotin-like protein 1 (Amotl1) from Mus musculus (Mouse).